The chain runs to 268 residues: MTGLSINNLSMRFELPNGDHVQALQDVSLDLKAGELLSVLGPSGCGKTTLLNIVAGFLAPTSGELILNGHRITGPDAERGMVFQQGALFEWMSVRENVAFGPSMKGTPKVDKDKTVDHLLDVVGLQDFKEKAVYELSGGMQQRVALARCLANDPDVILMDEPLGALDALTREKMQSLVLKLWKETGKTIILITHSVEEALLLGERLIVMAPRPGRIHKEYRLPFADLGVDSDLREVKKHPEFGPRREEILNMIWDMEEEIMGGKEDAA.

The region spanning 4 to 236 (LSINNLSMRF…LGVDSDLREV (233 aa)) is the ABC transporter domain. 41 to 48 (GPSGCGKT) serves as a coordination point for ATP.

Belongs to the ABC transporter superfamily. Taurine importer (TC 3.A.1.17.1) family. In terms of assembly, the complex is composed of two ATP-binding proteins (TauB), two transmembrane proteins (TauC) and a solute-binding protein (TauA).

It is found in the cell inner membrane. It catalyses the reaction taurine(out) + ATP + H2O = taurine(in) + ADP + phosphate + H(+). Part of the ABC transporter complex TauABC involved in taurine import. Responsible for energy coupling to the transport system. The protein is Taurine import ATP-binding protein TauB of Roseobacter denitrificans (strain ATCC 33942 / OCh 114) (Erythrobacter sp. (strain OCh 114)).